We begin with the raw amino-acid sequence, 880 residues long: Kinesin heavy chain (880 aa).

Residues 4–327 (SIKVVCRFRP…LRFGMRAKAI (324 aa)) enclose the Kinesin motor domain. Residues 85–92 (GQTGAGKS) and 235–242 (GSEKVGKT) contribute to the ATP site. The tract at residues 388-426 (VSGAKAAAAQTPRPSTPSRLATESRAETPVAERSATPGI) is disordered. Over residues 399 to 408 (PRPSTPSRLA) the composition is skewed to polar residues. Positions 428–849 (IDKDEREEFL…QEKLTTASHR (422 aa)) form a coiled coil.

The protein belongs to the TRAFAC class myosin-kinesin ATPase superfamily. Kinesin family. Kinesin subfamily.

Its subcellular location is the cytoplasm. It localises to the cytoskeleton. Functionally, kinesin is a microtubule-associated force-producing protein that may play a role in organelle transport. Its motor activity is directed toward the microtubule's plus end. The protein is Kinesin heavy chain (klp1) of Botryotinia fuckeliana (Noble rot fungus).